A 315-amino-acid chain; its full sequence is 6-phosphogluconolactonase-like protein 2 (315 aa).

Ser42 and Ser64 each carry phosphoserine. The tract at residues 59–85 (CKSTASAAEGKSGSSGSGSGSSKPKKE) is disordered. The span at 60–70 (KSTASAAEGKS) shows a compositional bias: low complexity.

Belongs to the glucosamine/galactosamine-6-phosphate isomerase family. 6-phosphogluconolactonase subfamily.

It is found in the cytoplasm. Functionally, may be involved in regulation of tRNA subcellular distribution. The protein is 6-phosphogluconolactonase-like protein 2 (SOL2) of Saccharomyces cerevisiae (strain ATCC 204508 / S288c) (Baker's yeast).